A 388-amino-acid polypeptide reads, in one-letter code: MSFNRPPNGVYYIRSAVELRAFVNLLKKFKGYATTLITLYINAERPIPDVVNLLRSEWSTAANIKDKTTRTHVQDTLERIINNLKGEAKAPENGMAVFAGFHMINQGNYEWVYYVVIPPQPINTFKYICDTAFHTELLEDQLHAGVVYGIVVIERGEAVIALLKGGQWEVVKSVEFFVPGKHHAGGQSANRFKRQTEHLAEAFYKMVAEEANKIFLQIPTLKGIIVAGPGPTKEDFLEEGGLDYRLKDKILAIVPACCANEYGVMEAIRNAQEQLKESEYVKAKEVMDKVMYYAVKKSEYLVYGRERALKALEMGIADIIVIAEELGEDAVLEVIMKAEEKGIKVEVVPRGVEESKTLMQAFGGYVALLSTPVWVLEQQLSIAEAAQR.

It belongs to the eukaryotic release factor 1 family. As to quaternary structure, heterodimer of two subunits, one of which binds GTP.

It localises to the cytoplasm. Its function is as follows. Directs the termination of nascent peptide synthesis (translation) in response to the termination codons UAA, UAG and UGA. The polypeptide is Peptide chain release factor subunit 1 (prf1) (Pyrobaculum aerophilum (strain ATCC 51768 / DSM 7523 / JCM 9630 / CIP 104966 / NBRC 100827 / IM2)).